The sequence spans 205 residues: Holliday junction branch migration complex subunit RuvA (205 aa).

The segment at 1–64 (MIGKLKGLID…EDQIKLFGFR (64 aa)) is domain I. The interval 65 to 143 (SDLEREWFRL…GFASVDPAVA (79 aa)) is domain II. The interval 144–153 (HLSGAIEERS) is flexible linker. Residues 153 to 205 (SAPRPVADAISALVNLGYGQPQAAAAIAAAARSAGDAAQTAQLIKLGLKELSK) form a domain III region.

Belongs to the RuvA family. In terms of assembly, homotetramer. Forms an RuvA(8)-RuvB(12)-Holliday junction (HJ) complex. HJ DNA is sandwiched between 2 RuvA tetramers; dsDNA enters through RuvA and exits via RuvB. An RuvB hexamer assembles on each DNA strand where it exits the tetramer. Each RuvB hexamer is contacted by two RuvA subunits (via domain III) on 2 adjacent RuvB subunits; this complex drives branch migration. In the full resolvosome a probable DNA-RuvA(4)-RuvB(12)-RuvC(2) complex forms which resolves the HJ.

It localises to the cytoplasm. Functionally, the RuvA-RuvB-RuvC complex processes Holliday junction (HJ) DNA during genetic recombination and DNA repair, while the RuvA-RuvB complex plays an important role in the rescue of blocked DNA replication forks via replication fork reversal (RFR). RuvA specifically binds to HJ cruciform DNA, conferring on it an open structure. The RuvB hexamer acts as an ATP-dependent pump, pulling dsDNA into and through the RuvAB complex. HJ branch migration allows RuvC to scan DNA until it finds its consensus sequence, where it cleaves and resolves the cruciform DNA. The sequence is that of Holliday junction branch migration complex subunit RuvA from Rhodopseudomonas palustris (strain BisA53).